Here is a 62-residue protein sequence, read N- to C-terminus: YTLKCNKLVPLFYKTCPAGKNLCYKMFMMSNKTVPVKRGCIDVCPKNSALVKYVCCNTDRCN.

An N-terminal signal peptide occupies residues 1 to 2 (YT). 4 disulfide bridges follow: cysteine 5–cysteine 23, cysteine 16–cysteine 40, cysteine 44–cysteine 55, and cysteine 56–cysteine 61.

Belongs to the three-finger toxin family. Short-chain subfamily. Type IA cytotoxin sub-subfamily. In terms of assembly, monomer in solution; Homodimer and oligomer in the presence of negatively charged lipids forming a pore with a size ranging between 20 and 30 Angstroms. In terms of tissue distribution, expressed by the venom gland.

It localises to the secreted. The protein resides in the target cell membrane. Shows cytolytic activity on many different cells by forming pore in lipid membranes. In vivo, increases heart rate or kills the animal by cardiac arrest. In addition, it binds to heparin with high affinity, interacts with Kv channel-interacting protein 1 (KCNIP1) in a calcium-independent manner, and binds to integrin alpha-V/beta-3 (ITGAV/ITGB3) with moderate affinity. The chain is Cytotoxin 7 from Naja sputatrix (Malayan spitting cobra).